The primary structure comprises 378 residues: Cytochrome b (378 aa).

Transmembrane regions (helical) follow at residues 34-54 (FGSL…FLAM), 78-99 (WFLR…FIHV), 114-134 (WNTG…GYVL), and 179-199 (FFTF…IHLL). Residues H84 and H98 each contribute to the heme b site. H183 and H197 together coordinate heme b. H202 is an a ubiquinone binding site. Helical transmembrane passes span 227–247 (YKDI…IWKF), 289–309 (LGGV…PFTH), 321–341 (LNQI…WIGA), and 348–368 (YILT…INPL).

Belongs to the cytochrome b family. As to quaternary structure, the main subunits of complex b-c1 are: cytochrome b, cytochrome c1 and the Rieske protein. Requires heme b as cofactor.

The protein resides in the mitochondrion inner membrane. Component of the ubiquinol-cytochrome c reductase complex (complex III or cytochrome b-c1 complex) that is part of the mitochondrial respiratory chain. The b-c1 complex mediates electron transfer from ubiquinol to cytochrome c. Contributes to the generation of a proton gradient across the mitochondrial membrane that is then used for ATP synthesis. In Anopheles gambiae (African malaria mosquito), this protein is Cytochrome b (mt:Cyt-b).